The following is a 2430-amino-acid chain: Transcription factor HIVEP2 (2430 aa).

The tract at residues 1–127 (MDTGDTALGQ…SLEGPPWLFP (127 aa)) is disordered. Polar residues-rich tracts occupy residues 11 to 22 (KATSRSGETDSV) and 96 to 110 (HSLSFPQHSLSQGMT). 2 C2H2-type zinc fingers span residues 189-211 (YICPYCSRACAKPSVLKKHIRSH) and 217-239 (YPCIPCGFSFKTKSNLYKHRKSH). Disordered regions lie at residues 271–302 (IHSDGEQSTDTDEESSLFAEASDKVSPGPPVP), 374–418 (SEKK…NTNA), and 744–995 (AHGH…SGKH). The segment covering 381–418 (SEPSLNLLSPHSKGSTDSGYFSRSESAEQQISPPNTNA) has biased composition (polar residues). Composition is skewed to basic and acidic residues over residues 744-753 (AHGHSDRLDP) and 775-784 (DPDKMTDLGK). Residues 792-804 (SVIQHTNSLSRPN) show a composition bias toward polar residues. Ser811 carries the phosphoserine modification. The segment covering 853–863 (SKPTPSQQVPQ) has biased composition (polar residues). Residues 884 to 908 (RVTEEPDKPEKEKEAPTKEPEKPVE) are compositionally biased toward basic and acidic residues. The Nuclear localization signal signature appears at 929-935 (PKKKRLR). A phosphoserine mark is found at Ser942, Ser947, Ser1040, Ser1431, and Ser1435. Low complexity predominate over residues 944 to 974 (GESSFESTGTGLSRSPSQESNLSHSSSFSMS). Residues 1472–1584 (KKGLSRPQKP…GGQQEEEGKA (113 aa)) are disordered. Low complexity-rich tracts occupy residues 1499 to 1520 (SRSSSFSSLSPSSSQDHPSASG) and 1560 to 1569 (SDMSMSPQSS). 2 consecutive C2H2-type zinc fingers follow at residues 1783 to 1805 (YICEECGIRCKKPSMLKKHIRTH) and 1811 to 1835 (YVCKLCNFAFKTKGNLTKHMKSKAH). 2 disordered regions span residues 1848 to 1931 (SVDD…SSLP) and 1986 to 2117 (FQSK…SPRR). A compositionally biased stretch (acidic residues) spans 1850-1860 (DDTETEEAENM). A compositionally biased stretch (basic and acidic residues) spans 1861-1871 (EELHKTSEKHS). Acidic residues predominate over residues 1883–1909 (DAEESDGEDGDDNDDDDEDDDDFDDQG). Residues 1991–2001 (TDSEPDKDRLD) show a composition bias toward basic and acidic residues. The span at 2013–2037 (SSEPSSSPRDFSPSSYRSSPGYDSS) shows a compositional bias: low complexity. 10 tandem repeats follow at residues 2037–2040 (SPCR), 2043–2046 (SPKR), 2055–2058 (SPRR), 2067–2070 (SPMR), 2073–2076 (SPRK), 2090–2093 (SPRR), 2096–2099 (SPRR), 2102–2105 (SPGK), 2114–2117 (SPRR), and 2129–2132 (SPRR). The interval 2037–2132 (SPCRDNSPKR…TTIRAPSPRR (96 aa)) is 10 X 4 AA tandem repeats of S-P-[RGMKC]-[RK]. Basic and acidic residues predominate over residues 2062–2085 (PRRDLSPMRHLSPRKEAALRREMS). Ser2102 bears the Phosphoserine mark. Over residues 2107 to 2116 (ITARRDLSPR) the composition is skewed to basic and acidic residues. Disordered regions lie at residues 2226–2252 (PALSGLHPPPTLPLPTEGSEEKKGAPG), 2268–2309 (KQAP…QEEN), and 2352–2430 (SIRH…NQLH). Low complexity predominate over residues 2271 to 2289 (PQVLQSSGLPSSPSSPRLL). 2 positions are modified to phosphoserine: Ser2281 and Ser2285. Over residues 2291-2301 (KQSTSEDSLNS) the composition is skewed to polar residues. The span at 2371–2380 (PDLHDGEKDT) shows a compositional bias: basic and acidic residues. A compositionally biased stretch (polar residues) spans 2406–2417 (FQSSKELSLSTE). Phosphoserine occurs at positions 2413 and 2415.

In terms of assembly, interacts with TCF4. As to expression, expressed in heart, lung, skeletal muscle and liver. In the brain expressed in cerebral cortex, hippocampus, corpora amygdala and cerebellar cortex.

The protein resides in the nucleus. Specifically binds to the DNA sequence 5'-GGGACTTTCC-3' which is found in the enhancer elements of numerous viral promoters such as those of SV40, CMV, or HIV1. In addition, related sequences are found in the enhancer elements of a number of cellular promoters, including those of the class I MHC, interleukin-2 receptor, somatostatin receptor II, and interferon-beta genes. It may act in T-cell activation. This is Transcription factor HIVEP2 (Hivep2) from Mus musculus (Mouse).